Here is a 123-residue protein sequence, read N- to C-terminus: MATINQLVRQPRKRLVEKSDVPALQNCPQRRGVCTRVYTTTPKKPNSALRKVCRVRLTNGYEVTSYIGGEGHNLQEHSVVLIRGGRVKDLPGVRYHTVRGSLDTSGVKDRKQGRSKYGAKRPK.

Asp-89 is subject to 3-methylthioaspartic acid. A disordered region spans residues 101 to 123 (SLDTSGVKDRKQGRSKYGAKRPK). The span at 113 to 123 (GRSKYGAKRPK) shows a compositional bias: basic residues.

It belongs to the universal ribosomal protein uS12 family. In terms of assembly, part of the 30S ribosomal subunit. Contacts proteins S8 and S17. May interact with IF1 in the 30S initiation complex.

Functionally, with S4 and S5 plays an important role in translational accuracy. Its function is as follows. Interacts with and stabilizes bases of the 16S rRNA that are involved in tRNA selection in the A site and with the mRNA backbone. Located at the interface of the 30S and 50S subunits, it traverses the body of the 30S subunit contacting proteins on the other side and probably holding the rRNA structure together. The combined cluster of proteins S8, S12 and S17 appears to hold together the shoulder and platform of the 30S subunit. This chain is Small ribosomal subunit protein uS12, found in Azotobacter vinelandii (strain DJ / ATCC BAA-1303).